Consider the following 157-residue polypeptide: MKILYPGTFDPLTNGHLDLIERAEKIFGNLVVAVLENTSKTPTFNLERRIIQIKYSLSHLPNIEIISYSGLTVDCANDLKANLILRGLRAMSDFEYELQIAHTNKSLNNDIETIFLSTNTNYSFLSSSLVKEVAKFGGEINHMVPPSVEKDLKEYFK.

Thr8 contributes to the substrate binding site. ATP-binding positions include 8 to 9 (TF) and His16. Lys40, Thr72, and Arg86 together coordinate substrate. Residues 87–89 (GLR), Glu97, and 122–128 (YSFLSSS) each bind ATP.

This sequence belongs to the bacterial CoaD family. Homohexamer. Mg(2+) serves as cofactor.

The protein resides in the cytoplasm. It catalyses the reaction (R)-4'-phosphopantetheine + ATP + H(+) = 3'-dephospho-CoA + diphosphate. It participates in cofactor biosynthesis; coenzyme A biosynthesis; CoA from (R)-pantothenate: step 4/5. Reversibly transfers an adenylyl group from ATP to 4'-phosphopantetheine, yielding dephospho-CoA (dPCoA) and pyrophosphate. The chain is Phosphopantetheine adenylyltransferase from Prochlorococcus marinus (strain MIT 9312).